We begin with the raw amino-acid sequence, 417 residues long: NADH-quinone oxidoreductase subunit D (417 aa).

The protein belongs to the complex I 49 kDa subunit family. As to quaternary structure, NDH-1 is composed of 14 different subunits. Subunits NuoB, C, D, E, F, and G constitute the peripheral sector of the complex.

It is found in the cell inner membrane. It carries out the reaction a quinone + NADH + 5 H(+)(in) = a quinol + NAD(+) + 4 H(+)(out). Functionally, NDH-1 shuttles electrons from NADH, via FMN and iron-sulfur (Fe-S) centers, to quinones in the respiratory chain. The immediate electron acceptor for the enzyme in this species is believed to be ubiquinone. Couples the redox reaction to proton translocation (for every two electrons transferred, four hydrogen ions are translocated across the cytoplasmic membrane), and thus conserves the redox energy in a proton gradient. This chain is NADH-quinone oxidoreductase subunit D, found in Cupriavidus metallidurans (strain ATCC 43123 / DSM 2839 / NBRC 102507 / CH34) (Ralstonia metallidurans).